The following is a 307-amino-acid chain: NAD kinase (307 aa).

Asp80 functions as the Proton acceptor in the catalytic mechanism. Residues 80–81, His85, 154–155, His165, His182, Asp184, 195–200, and Gln254 each bind NAD(+); these read DG, ND, and TAYALS.

Belongs to the NAD kinase family. A divalent metal cation is required as a cofactor.

Its subcellular location is the cytoplasm. The enzyme catalyses NAD(+) + ATP = ADP + NADP(+) + H(+). Functionally, involved in the regulation of the intracellular balance of NAD and NADP, and is a key enzyme in the biosynthesis of NADP. Catalyzes specifically the phosphorylation on 2'-hydroxyl of the adenosine moiety of NAD to yield NADP. This Acinetobacter baylyi (strain ATCC 33305 / BD413 / ADP1) protein is NAD kinase.